A 781-amino-acid chain; its full sequence is Mitochondrial inner membrane m-AAA protease component paraplegin (781 aa).

A mitochondrion-targeting transit peptide spans 1-43; the sequence is MAAALLLLRGLRPGPEPRPRRLWGLLSGRGPGLSSGAGARRPY. 2 disordered regions span residues 22–56 and 103–135; these read LWGLLSGRGPGLSSGAGARRPYAARGTPVGPAAAG and TSRMKQKNKDNDKPKGKTPEDDEEEKRRKERED. The segment covering 36–56 has biased composition (low complexity); sequence GAGARRPYAARGTPVGPAAAG. Positions 44 to 105 are cleaved as a propeptide — removed in mature form; it reads AARGTPVGPA…GSTLYFNTSR (62 aa). The Mitochondrial matrix portion of the chain corresponds to 106-144; sequence MKQKNKDNDKPKGKTPEDDEEEKRRKEREDQMYRERLRT. The span at 109 to 135 shows a compositional bias: basic and acidic residues; the sequence is KNKDNDKPKGKTPEDDEEEKRRKERED. Residues 145-165 form a helical membrane-spanning segment; the sequence is LFIIALVMSLLNSLSTSGGSI. Residues 166–248 are Mitochondrial intermembrane-facing; sequence SWADFVNEML…DRIPVSYKRT (83 aa). A helical membrane pass occupies residues 249–269; that stretch reads GFFGNALYALGMTAVGLAILW. At 270–781 the chain is on the mitochondrial matrix side; sequence YVFRLAGMTG…ASGEEEAPAP (512 aa). ATP is bound by residues Ala312, Gly352, Cys353, Gly354, Lys355, Thr356, and Leu357. Tyr505 carries the 3'-nitrotyrosine modification. Position 574 (His574) interacts with Zn(2+). Glu575 is a catalytic residue. Residues His578 and Asp650 each contribute to the Zn(2+) site. The interaction with PPIF stretch occupies residues 701–781; it reads HEAKLLVAKA…ASGEEEAPAP (81 aa).

This sequence in the N-terminal section; belongs to the AAA ATPase family. The protein in the C-terminal section; belongs to the peptidase M41 family. As to quaternary structure, forms heterohexamers with SPG7 and AFG3L1. The m-AAA protease is either composed of homohexamers of AFG3L2 or heterohexamers of AFG3L1, AFG3L2 and/or SPG7. Component of the mitochondrial permeability transition pore complex (mPTPC), at least composed of SPG7, VDAC1 and PPIF. Interacts with MAIP1. Zn(2+) serves as cofactor. Post-translationally, upon import into the mitochondrion, the N-terminal transit peptide is cleaved by the mitochondrial-processing peptidase (MPP) to generate an intermediate form which undergoes a second proteolytic cleavage mediated by proteases AFG3L1 and/or AFG3L2 removing an additional N-terminal fragment to generate the proteolytically active mature form. In terms of tissue distribution, expressed in the brain and retina (at protein level).

The protein localises to the mitochondrion inner membrane. The catalysed reaction is ATP + H2O = ADP + phosphate + H(+). In terms of biological role, catalytic component of the m-AAA protease, a protease that plays a key role in proteostasis of inner mitochondrial membrane proteins, and which is essential for axonal and neuron development. SPG7 possesses both ATPase and protease activities: the ATPase activity is required to unfold substrates, threading them into the internal proteolytic cavity for hydrolysis into small peptide fragments. The m-AAA protease exerts a dual role in the mitochondrial inner membrane: it mediates the processing of specific regulatory proteins and ensures protein quality control by degrading misfolded polypeptides. Mediates protein maturation of the mitochondrial ribosomal subunit MRPL32/bL32m by catalyzing the cleavage of the presequence of MRPL32/bL32m prior to assembly into the mitochondrial ribosome. Acts as a regulator of calcium in neurons by mediating degradation of SMDT1/EMRE before its assembly with the uniporter complex, limiting the availability of SMDT1/EMRE for MCU assembly and promoting efficient assembly of gatekeeper subunits with MCU. Also regulates mitochondrial calcium by catalyzing degradation of MCU. Plays a role in the formation and regulation of the mitochondrial permeability transition pore (mPTP) and its proteolytic activity is dispensable for this function. The protein is Mitochondrial inner membrane m-AAA protease component paraplegin of Mus musculus (Mouse).